Reading from the N-terminus, the 154-residue chain is 6,7-dimethyl-8-ribityllumazine synthase (154 aa).

5-amino-6-(D-ribitylamino)uracil contacts are provided by residues Phe-26, 60–62 (ALE), and 84–86 (CII). 89–90 (ET) provides a ligand contact to (2S)-2-hydroxy-3-oxobutyl phosphate. His-92 acts as the Proton donor in catalysis. 5-amino-6-(D-ribitylamino)uracil is bound at residue Asn-117. Residue Arg-131 coordinates (2S)-2-hydroxy-3-oxobutyl phosphate.

Belongs to the DMRL synthase family.

It carries out the reaction (2S)-2-hydroxy-3-oxobutyl phosphate + 5-amino-6-(D-ribitylamino)uracil = 6,7-dimethyl-8-(1-D-ribityl)lumazine + phosphate + 2 H2O + H(+). Its pathway is cofactor biosynthesis; riboflavin biosynthesis; riboflavin from 2-hydroxy-3-oxobutyl phosphate and 5-amino-6-(D-ribitylamino)uracil: step 1/2. Catalyzes the formation of 6,7-dimethyl-8-ribityllumazine by condensation of 5-amino-6-(D-ribitylamino)uracil with 3,4-dihydroxy-2-butanone 4-phosphate. This is the penultimate step in the biosynthesis of riboflavin. The sequence is that of 6,7-dimethyl-8-ribityllumazine synthase from Leptothrix cholodnii (strain ATCC 51168 / LMG 8142 / SP-6) (Leptothrix discophora (strain SP-6)).